The primary structure comprises 264 residues: Glutamate racemase (264 aa).

Residues 10 to 11 (DS) and 42 to 43 (YG) contribute to the substrate site. Cys73 serves as the catalytic Proton donor/acceptor. Residue 74 to 75 (NT) coordinates substrate. The Proton donor/acceptor role is filled by Cys183. 184-185 (TH) contacts substrate.

The protein belongs to the aspartate/glutamate racemases family. In terms of assembly, homodimer.

It carries out the reaction L-glutamate = D-glutamate. It participates in cell wall biogenesis; peptidoglycan biosynthesis. In terms of biological role, provides the (R)-glutamate required for cell wall biosynthesis. This chain is Glutamate racemase, found in Streptococcus pyogenes serotype M1.